We begin with the raw amino-acid sequence, 409 residues long: Argininosuccinate synthase (409 aa).

ATP-binding positions include 10–18 and Ala-37; that span reads AYSGGLDTS. Residues Tyr-90 and Ser-95 each coordinate L-citrulline. Gly-120 contacts ATP. L-aspartate is bound by residues Thr-122, Asn-126, and Asp-127. Asn-126 provides a ligand contact to L-citrulline. Positions 130, 182, 191, 267, and 279 each coordinate L-citrulline.

It belongs to the argininosuccinate synthase family. Type 1 subfamily. As to quaternary structure, homotetramer.

The protein resides in the cytoplasm. It carries out the reaction L-citrulline + L-aspartate + ATP = 2-(N(omega)-L-arginino)succinate + AMP + diphosphate + H(+). It functions in the pathway amino-acid biosynthesis; L-arginine biosynthesis; L-arginine from L-ornithine and carbamoyl phosphate: step 2/3. The polypeptide is Argininosuccinate synthase (Azoarcus sp. (strain BH72)).